The chain runs to 158 residues: 2-C-methyl-D-erythritol 2,4-cyclodiphosphate synthase (158 aa).

A divalent metal cation-binding residues include aspartate 8 and histidine 10. 4-CDP-2-C-methyl-D-erythritol 2-phosphate is bound by residues 8 to 10 (DVH) and 34 to 35 (HS). Residue histidine 42 participates in a divalent metal cation binding. Residues 56 to 58 (DIG), 132 to 135 (TTNE), and arginine 142 each bind 4-CDP-2-C-methyl-D-erythritol 2-phosphate.

It belongs to the IspF family. As to quaternary structure, homotrimer. Requires a divalent metal cation as cofactor.

It catalyses the reaction 4-CDP-2-C-methyl-D-erythritol 2-phosphate = 2-C-methyl-D-erythritol 2,4-cyclic diphosphate + CMP. The protein operates within isoprenoid biosynthesis; isopentenyl diphosphate biosynthesis via DXP pathway; isopentenyl diphosphate from 1-deoxy-D-xylulose 5-phosphate: step 4/6. Its function is as follows. Involved in the biosynthesis of isopentenyl diphosphate (IPP) and dimethylallyl diphosphate (DMAPP), two major building blocks of isoprenoid compounds. Catalyzes the conversion of 4-diphosphocytidyl-2-C-methyl-D-erythritol 2-phosphate (CDP-ME2P) to 2-C-methyl-D-erythritol 2,4-cyclodiphosphate (ME-CPP) with a corresponding release of cytidine 5-monophosphate (CMP). The protein is 2-C-methyl-D-erythritol 2,4-cyclodiphosphate synthase of Chlorobium phaeobacteroides (strain DSM 266 / SMG 266 / 2430).